The sequence spans 110 residues: Phosphoribosyl-AMP cyclohydrolase (110 aa).

Aspartate 80 contacts Mg(2+). A Zn(2+)-binding site is contributed by cysteine 81. 2 residues coordinate Mg(2+): aspartate 82 and aspartate 84. 2 residues coordinate Zn(2+): cysteine 97 and cysteine 104.

This sequence belongs to the PRA-CH family. As to quaternary structure, homodimer. Mg(2+) is required as a cofactor. Zn(2+) serves as cofactor.

It is found in the cytoplasm. The catalysed reaction is 1-(5-phospho-beta-D-ribosyl)-5'-AMP + H2O = 1-(5-phospho-beta-D-ribosyl)-5-[(5-phospho-beta-D-ribosylamino)methylideneamino]imidazole-4-carboxamide. It participates in amino-acid biosynthesis; L-histidine biosynthesis; L-histidine from 5-phospho-alpha-D-ribose 1-diphosphate: step 3/9. Functionally, catalyzes the hydrolysis of the adenine ring of phosphoribosyl-AMP. The chain is Phosphoribosyl-AMP cyclohydrolase from Clostridium botulinum (strain 657 / Type Ba4).